The following is a 76-amino-acid chain: NADH dehydrogenase [ubiquinone] 1 subunit C1, mitochondrial (76 aa).

The N-terminal 27 residues, 1–27 (MAPSALLRPLSRLLAPARLPSGPSVRS), are a transit peptide targeting the mitochondrion. Residues 41–59 (WLKVGFTLGTTVFLWIYLI) traverse the membrane as a helical segment.

Belongs to the complex I NDUFC1 subunit family. Complex I is composed of 45 different subunits.

Its subcellular location is the mitochondrion inner membrane. Functionally, accessory subunit of the mitochondrial membrane respiratory chain NADH dehydrogenase (Complex I), that is believed not to be involved in catalysis. Complex I functions in the transfer of electrons from NADH to the respiratory chain. The immediate electron acceptor for the enzyme is believed to be ubiquinone. This is NADH dehydrogenase [ubiquinone] 1 subunit C1, mitochondrial (NDUFC1) from Homo sapiens (Human).